Consider the following 62-residue polypeptide: Large ribosomal subunit protein uL29 (62 aa).

It belongs to the universal ribosomal protein uL29 family.

This Geobacter metallireducens (strain ATCC 53774 / DSM 7210 / GS-15) protein is Large ribosomal subunit protein uL29.